A 196-amino-acid chain; its full sequence is Pro-FMRFamide-related neuropeptide VF (196 aa).

The N-terminal stretch at 1–21 (MEIISLKRFILLMLATSSLLT) is a signal peptide. Positions 22–57 (SNIFCTDESRIPSLYSKKNYDKYSEPRGDLGWEKER) are excised as a propeptide. Position 92 is a phenylalanine amide (Phe92). 2 propeptides span residues 95–99 (NMEEE) and 115–121 (NREDSLS). Phe131 bears the Phenylalanine amide mark. The propeptide occupies 134–196 (TIAAKSITKT…IDDAELKQEK (63 aa)).

It belongs to the FARP (FMRFamide related peptide) family. In terms of tissue distribution, expressed in hypothalamus, where it is localized to the dorsomedial hypothalamic nucleus (DMH), paraventricular nucleus (PVN), and to neuronal projections from the PVN to the neurosecretory zone of the median eminence.

Its subcellular location is the secreted. Its function is as follows. May act in concert with kisspeptin, through opposing affects, to regulate the activity of gonadotropin-releasing hormone (GnRH) neurons across the seasons, leading to an annual change in fertility and the cyclical seasonal transition from non-breeding to breeding season. Efficiently inhibits forskolin-induced production of cAMP. Acts as a potent negative regulator of gonadotropin synthesis and secretion. Induces secretion of prolactin. In terms of biological role, efficiently inhibits forskolin-induced production of cAMP. Blocks morphine-induced analgesia. Functionally, shows no inhibitory activity of forskolin-induced production of cAMP. This is Pro-FMRFamide-related neuropeptide VF from Ovis aries (Sheep).